We begin with the raw amino-acid sequence, 151 residues long: Putative esterase VNG_1336C (151 aa).

This sequence belongs to the thioesterase PaaI family.

The protein is Putative esterase VNG_1336C of Halobacterium salinarum (strain ATCC 700922 / JCM 11081 / NRC-1) (Halobacterium halobium).